The following is a 101-amino-acid chain: uncharacterized protein (101 aa).

This is an uncharacterized protein from Shigella flexneri.